Here is a 570-residue protein sequence, read N- to C-terminus: MIPPEIRRSVLLQKAIKLALAGTLLTFASFSATAADPSSDTETPQPPDILLGPLFNDVQNAKLFPDQKTFADAIPNSDPLMILADYRMQRNQSGFDLRHFVDVNFTLPKAGEKYVPPAGQSLREHIDGLWPVLTRSTKNVEKWDSLLPLPESYVVPGGRFREIYYWDSYFTMLGLAESGHWDKVADMVANFGYEIDAWGHIPNGNRTYYLSRSQPPFFAFMVELLAQHEGDDALKEYLPQLQKEYAYWMEGVETLQPGQQNQRVVKLEDGSVLNRYWDDRDTPRPESWVEDIATAKSNPNRPATEIYRDLRSAAASGWDFSSRWMDNPQQLSTIRTTTIVPVDLNALLYQLEKTLARASAAAGDRAKASHYDALANARQQAIEMHLWNNKEGWYADYDLKNNKIRDQLTAAALFPLYVNAAAKDRAAKVAAAAQAHLLQPGGLATTSVKSGQQWDAPNGWAPLQWVAAEGLQNYGQDDVAMEVTWRFLTNVQHTYDREKKLVEKYDVSSTGTGGGGGEYPLQDGFGWTNGVTLKMLDLICPQEKPCDSVPSTRPASLSATPTKTPSAATQ.

The first 34 residues, Met1–Ala34, serve as a signal peptide directing secretion. Substrate-binding positions include Arg159, Trp166–Asp167, Asn203, Arg212–Gln214, Arg284–Glu286, and Gly317. Residues Asp319 and Glu503 each act as proton donor/acceptor in the active site. Glu518 contacts substrate. The tract at residues Lys544–Gln570 is disordered. A compositionally biased stretch (low complexity) spans Pro554–Gln570.

Belongs to the glycosyl hydrolase 37 family. Monomer.

The protein localises to the periplasm. It carries out the reaction alpha,alpha-trehalose + H2O = alpha-D-glucose + beta-D-glucose. In terms of biological role, provides the cells with the ability to utilize trehalose at high osmolarity by splitting it into glucose molecules that can subsequently be taken up by the phosphotransferase-mediated uptake system. This is Periplasmic trehalase from Salmonella paratyphi B (strain ATCC BAA-1250 / SPB7).